The following is a 129-amino-acid chain: Small ribosomal subunit protein uS11 (129 aa).

It belongs to the universal ribosomal protein uS11 family. In terms of assembly, part of the 30S ribosomal subunit. Interacts with proteins S7 and S18. Binds to IF-3.

In terms of biological role, located on the platform of the 30S subunit, it bridges several disparate RNA helices of the 16S rRNA. Forms part of the Shine-Dalgarno cleft in the 70S ribosome. The chain is Small ribosomal subunit protein uS11 from Novosphingobium aromaticivorans (strain ATCC 700278 / DSM 12444 / CCUG 56034 / CIP 105152 / NBRC 16084 / F199).